A 181-amino-acid chain; its full sequence is Adenylate kinase (181 aa).

Position 10–15 (10–15 (GAGKGT)) interacts with ATP. Residues 30–59 (STGDLFRANIGQATALGVEAKKYIDAGELV) form an NMP region. AMP contacts are provided by residues Thr31, Arg36, 57 to 59 (ELV), 85 to 88 (GFPR), and Gln92. The LID stretch occupies residues 126 to 132 (ARGRADD). Arg127 is a binding site for ATP. Positions 129 and 140 each coordinate AMP. Residue Gly166 coordinates ATP.

This sequence belongs to the adenylate kinase family. Monomer.

The protein localises to the cytoplasm. The catalysed reaction is AMP + ATP = 2 ADP. Its pathway is purine metabolism; AMP biosynthesis via salvage pathway; AMP from ADP: step 1/1. Its function is as follows. Catalyzes the reversible transfer of the terminal phosphate group between ATP and AMP. Plays an important role in cellular energy homeostasis and in adenine nucleotide metabolism. This is Adenylate kinase from Rhodococcus erythropolis (strain PR4 / NBRC 100887).